Consider the following 184-residue polypeptide: Inactive cytochrome P450 monooxygenase lolP2 (184 aa).

Residues 10–30 (GIVWLTVAAIAISYILQSSFL) traverse the membrane as a helical segment. The tract at residues 161 to 184 (RRTRGSRPRSRPRWMPARWSRSSP) is disordered. The segment covering 163 to 172 (TRGSRPRSRP) has biased composition (basic residues). Over residues 173–184 (RWMPARWSRSSP) the composition is skewed to low complexity.

Belongs to the cytochrome P450 family.

It localises to the membrane. Its function is as follows. Cytochrome P450 monooxygenase; part of the gene cluster that mediates the biosynthesis of loline alkaloids, potent insecticidal agents composed of a pyrrolizidine ring system and an uncommon ether bridge linking carbons 2 and 7. Lolines are structurally differentiated by the various modifications of the L-amino group and include norloline, loline, N-methylloline, N-acetylloline, N-acetylnorloline, and N-formylloline. The first committed step is the condensation of O-acetyl-L-homoserine (derived from L-aspartic acid) and L-proline, probably catalyzed by the gamma-type pyridoxal 5'-phosphate(PLP)-dependent enzyme lolC, to give the diamino diacid, NACPP. Ensuing cyclization, decarboxylation, and acetylation steps yield 1-exo-acetamidopyrrolizidine (AcAP). LolO is required for installation of the ether bridge upon the pathway intermediate, 1-exo-acetamidopyrrolizidine (AcAP). In sequential 2-oxoglutarate- and O(2)-consuming steps, lolO removes hydrogens from C2 and C7 of AcAP to form both carbon-oxygen bonds in N-acetylnorloline (NANL), the precursor to all other lolines. The enzymes lolD, lolE, lolF and lolT have also been proposed to be involved in the ether-bridge installation. Further processing of the exocyclic moiety of NANL by fungal N-acetamidase (LolN), methyltransferase (LolM), and cytochrome P450 (LolP) enzymes, with occasional involvement of a plant acetyltransferase, generates the other known lolines. LolN transforms NANL to norlonine which is monomethylated and dimethylated to respectively lonine and N-methyllonine (NML) by lolM. LolP catalyzes hydroxylation of the methyl group in N-methylloline (NML) and further oxygenation to N-formylloline (NFL). A plant acetyltransferase is responsible for the acetylation of loline to form N-acetylloline (NAL). LolA might interact with aspartate kinase to prevent feedback inhibition of its activity by these end products and thereby promote production of L-homoserine from L-aspartate. In Epichloe uncinata (Endophyte fungus), this protein is Inactive cytochrome P450 monooxygenase lolP2.